The sequence spans 630 residues: Elongation factor 4 (630 aa).

Positions 1–22 (MTVARNRAGAGPGKGSPISSFA) are disordered. The tr-type G domain occupies 30–211 (ARIRNFCIIA…EVVRQVPAPV (182 aa)). GTP contacts are provided by residues 42-47 (DHGKST) and 158-161 (NKID).

Belongs to the TRAFAC class translation factor GTPase superfamily. Classic translation factor GTPase family. LepA subfamily.

The protein localises to the cell membrane. It carries out the reaction GTP + H2O = GDP + phosphate + H(+). Functionally, required for accurate and efficient protein synthesis under certain stress conditions. May act as a fidelity factor of the translation reaction, by catalyzing a one-codon backward translocation of tRNAs on improperly translocated ribosomes. Back-translocation proceeds from a post-translocation (POST) complex to a pre-translocation (PRE) complex, thus giving elongation factor G a second chance to translocate the tRNAs correctly. Binds to ribosomes in a GTP-dependent manner. The polypeptide is Elongation factor 4 (Rhodococcus opacus (strain B4)).